Here is a 150-residue protein sequence, read N- to C-terminus: Classical arabinogalactan protein 6 (150 aa).

Residues 1 to 20 (MARQFVVLVLLTLTIATAFA) form the signal peptide. 2 stretches are compositionally biased toward low complexity: residues 19 to 75 (FAAD…SPAA) and 85 to 98 (SASSPSDSAEAPTV). The disordered stretch occupies residues 19-131 (FAADAPSASP…ESPKSGAVTT (113 aa)). Residue serine 126 is the site of GPI-anchor amidated serine attachment. A propeptide spans 127–150 (GAVTTAKFSVVGTVATVGFFFFSF) (removed in mature form).

This sequence belongs to the classical AGP family. In terms of processing, O-glycosylated on the hydroxyproline residues. In terms of tissue distribution, expressed in the anthers.

It localises to the cell membrane. In terms of biological role, proteoglycan that seems to be implicated in diverse developmental roles such as differentiation, cell-cell recognition, embryogenesis and programmed cell death. Plays an important role during the formation of the nexine layer of the pollen wall. This is Classical arabinogalactan protein 6 (AGP6) from Arabidopsis thaliana (Mouse-ear cress).